The primary structure comprises 96 residues: Putative pterin-4-alpha-carbinolamine dehydratase (96 aa).

This sequence belongs to the pterin-4-alpha-carbinolamine dehydratase family.

It carries out the reaction (4aS,6R)-4a-hydroxy-L-erythro-5,6,7,8-tetrahydrobiopterin = (6R)-L-erythro-6,7-dihydrobiopterin + H2O. This is Putative pterin-4-alpha-carbinolamine dehydratase from Prochlorococcus marinus (strain MIT 9312).